A 1557-amino-acid chain; its full sequence is DVA-1 polyprotein (1557 aa).

Positions 1 to 21 are cleaved as a signal peptide; the sequence is MKSTSFITLLLLSYFIVEAHS. The propeptide occupies 22-60; it reads SIFHWDDERLFKHDDTHSWLTDVQKAELETLKHQPIQLR. N-linked (GlcNAc...) asparagine glycosylation is present at N997.

This sequence belongs to the NPA family. Post-translationally, nematode polyprotein allergens (NPAs) are synthesized as large polypeptides that are subsequently proteolytically cleaved to active polypeptide units.

Its function is as follows. Has high binding affinity for fatty acids and retinoids. This Dictyocaulus viviparus (Bovine lungworm) protein is DVA-1 polyprotein (DVA-1).